A 353-amino-acid chain; its full sequence is Phosphate acyltransferase (353 aa).

It belongs to the PlsX family. In terms of assembly, homodimer. Probably interacts with PlsY.

It localises to the cytoplasm. The catalysed reaction is a fatty acyl-[ACP] + phosphate = an acyl phosphate + holo-[ACP]. The protein operates within lipid metabolism; phospholipid metabolism. Functionally, catalyzes the reversible formation of acyl-phosphate (acyl-PO(4)) from acyl-[acyl-carrier-protein] (acyl-ACP). This enzyme utilizes acyl-ACP as fatty acyl donor, but not acyl-CoA. This chain is Phosphate acyltransferase, found in Rhodopseudomonas palustris (strain HaA2).